Consider the following 343-residue polypeptide: Chlorophyll(ide) b reductase NOL, chloroplastic (343 aa).

The N-terminal 54 residues, 1–54 (MAATAAYLPLRAQAQVGLAPLRPSGSAAAGARLPGRTARRRLAARGGPEAAGIR), are a transit peptide targeting the chloroplast. NAD(+) is bound at residue 78-102 (ITGSTKGIGYALAKEFLKAGDNVVI). Catalysis depends on Tyr-228, which acts as the Proton acceptor.

Belongs to the short-chain dehydrogenases/reductases (SDR) family. In terms of assembly, interacts with NCY1 to form a complex that acts as a chlorophyll b reductase. As to expression, expressed in leaves and stems. Also detected in non-photosynthetic tissues such as roots.

Its subcellular location is the plastid. The protein resides in the chloroplast thylakoid membrane. It catalyses the reaction 7(1)-hydroxychlorophyllide a + NAD(+) = chlorophyllide b + NADH + H(+). The enzyme catalyses 7(1)-hydroxychlorophyllide a + NADP(+) = chlorophyllide b + NADPH + H(+). Functionally, required for chlorophyll b degradation. The sequence is that of Chlorophyll(ide) b reductase NOL, chloroplastic (NOL) from Oryza sativa subsp. japonica (Rice).